Here is a 946-residue protein sequence, read N- to C-terminus: Probable outer membrane protein pmp18 (946 aa).

The first 16 residues, 1–16, serve as a signal peptide directing secretion; it reads MQNNRSLSKSSFFVGA. In terms of domain architecture, Autotransporter spans 668–946; sequence QGQIAPTASG…YLHAGTTFKF (279 aa).

Belongs to the PMP outer membrane protein family.

The protein localises to the secreted. It localises to the cell wall. It is found in the cell outer membrane. The polypeptide is Probable outer membrane protein pmp18 (pmp18) (Chlamydia pneumoniae (Chlamydophila pneumoniae)).